Here is a 226-residue protein sequence, read N- to C-terminus: MGIRAIVVDTAGTTTDLTFIQDVLFPYSVKALPDFLAQNQHNVLVENCICDTRDIALEPDANLARVTEILQQWVHEDRKATPLKTLQGLIWKQGYAHGEFTGHIFPDFIEAVNRFSAQKLRIYSFSSGSVEAQKLLFSHSDGGDLTEMFSGHFDTRTGNKLDKQAYANILNTISLSPKQVLFVSDVVEELKAAEAAGMMTCQMVRDSKQRTGDYRTINSFDELVID.

It belongs to the HAD-like hydrolase superfamily. MasA/MtnC family. Monomer. Mg(2+) is required as a cofactor.

The catalysed reaction is 5-methylsulfanyl-2,3-dioxopentyl phosphate + H2O = 1,2-dihydroxy-5-(methylsulfanyl)pent-1-en-3-one + phosphate. The protein operates within amino-acid biosynthesis; L-methionine biosynthesis via salvage pathway; L-methionine from S-methyl-5-thio-alpha-D-ribose 1-phosphate: step 3/6. It participates in amino-acid biosynthesis; L-methionine biosynthesis via salvage pathway; L-methionine from S-methyl-5-thio-alpha-D-ribose 1-phosphate: step 4/6. Bifunctional enzyme that catalyzes the enolization of 2,3-diketo-5-methylthiopentyl-1-phosphate (DK-MTP-1-P) into the intermediate 2-hydroxy-3-keto-5-methylthiopentenyl-1-phosphate (HK-MTPenyl-1-P), which is then dephosphorylated to form the acireductone 1,2-dihydroxy-3-keto-5-methylthiopentene (DHK-MTPene). The sequence is that of Enolase-phosphatase E1 from Shewanella sp. (strain ANA-3).